We begin with the raw amino-acid sequence, 133 residues long: Holo-[acyl-carrier-protein] synthase (133 aa).

Residues Asp8 and Glu57 each contribute to the Mg(2+) site.

Belongs to the P-Pant transferase superfamily. AcpS family. Requires Mg(2+) as cofactor.

It localises to the cytoplasm. The enzyme catalyses apo-[ACP] + CoA = holo-[ACP] + adenosine 3',5'-bisphosphate + H(+). Transfers the 4'-phosphopantetheine moiety from coenzyme A to a Ser of acyl-carrier-protein. The protein is Holo-[acyl-carrier-protein] synthase of Parvibaculum lavamentivorans (strain DS-1 / DSM 13023 / NCIMB 13966).